The primary structure comprises 125 residues: Large ribosomal subunit protein bL20 (125 aa).

The protein belongs to the bacterial ribosomal protein bL20 family.

Its function is as follows. Binds directly to 23S ribosomal RNA and is necessary for the in vitro assembly process of the 50S ribosomal subunit. It is not involved in the protein synthesizing functions of that subunit. In Methylobacterium sp. (strain 4-46), this protein is Large ribosomal subunit protein bL20.